Consider the following 177-residue polypeptide: Large ribosomal subunit protein uL6 (177 aa).

The protein belongs to the universal ribosomal protein uL6 family. Part of the 50S ribosomal subunit.

In terms of biological role, this protein binds to the 23S rRNA, and is important in its secondary structure. It is located near the subunit interface in the base of the L7/L12 stalk, and near the tRNA binding site of the peptidyltransferase center. In Mesorhizobium japonicum (strain LMG 29417 / CECT 9101 / MAFF 303099) (Mesorhizobium loti (strain MAFF 303099)), this protein is Large ribosomal subunit protein uL6.